Consider the following 1142-residue polypeptide: ABC transporter F family member 4 (1142 aa).

The segment at 1-564 is disordered; the sequence is MGPKGKKKGQ…EDAFELAKKK (564 aa). 3 stretches are compositionally biased toward low complexity: residues 121–143, 153–166, and 182–195; these read PQPV…QQQQ and PQPV…APQK. 2 stretches are compositionally biased toward acidic residues: residues 203 to 212 and 233 to 244; these read SEDEDEEDEV and EEEEEEEEEEIE. Basic residues-rich tracts occupy residues 249 to 261 and 280 to 290; these read KGGK…KGGK and KGGKKDKKKGS. Acidic residues predominate over residues 295–306; it reads EEEEEEEEEEIE. A compositionally biased stretch (basic and acidic residues) spans 314–328; that stretch reads NKKDQKKGGKGKHVE. A compositionally biased stretch (acidic residues) spans 329–340; it reads EEEEEEEEEEIE. Residues 377–387 are compositionally biased toward basic residues; it reads KGGKKDKKKGS. Acidic residues-rich tracts occupy residues 392-404 and 441-451; these read EEEE…EEIE and EEEEQEQEEEE. Residues 456–467 are compositionally biased toward basic residues; it reads SKSNKKDKKKGK. The span at 471–480 shows a compositional bias: acidic residues; that stretch reads EEEEEEEEEE. Basic residues predominate over residues 485–496; sequence SKSNKKDKKKGS. Positions 501–518 are enriched in acidic residues; it reads EEEEEEEEEEEEEKEEEE. Over residues 530 to 548 the composition is skewed to basic residues; sequence AKKVKKVDKKEKKKEKEKK. 2 ABC transporter domains span residues 604 to 857 and 923 to 1139; these read IKFD…RSKE and LVFK…DNMV. ATP contacts are provided by residues 636-643 and 956-963; these read GRNGIGKS and GMNGVGKS.

It belongs to the ABC transporter superfamily.

This is ABC transporter F family member 4 (abcF4) from Dictyostelium discoideum (Social amoeba).